The sequence spans 40 residues: Metallothionein-1 (40 aa).

Belongs to the metallothionein superfamily. Type 5 family.

This protein binds cations of several transition elements. It is thought to be involved in detoxification processes. The polypeptide is Metallothionein-1 (MtnA) (Drosophila melanogaster (Fruit fly)).